The sequence spans 202 residues: Holliday junction branch migration complex subunit RuvA (202 aa).

The interval 1 to 64 (MIGRLSGTLL…EDAHLLFGFA (64 aa)) is domain I. Residues 65-143 (GRAERELFRQ…SLPSADLLSP (79 aa)) form a domain II region. Residues 144 to 152 (APAAGAALL) form a flexible linker region. The tract at residues 153–202 (VENDERADISQALQALGYSAREAEAALKSVPDGTDVATGIRLALKALARP) is domain III.

This sequence belongs to the RuvA family. Homotetramer. Forms an RuvA(8)-RuvB(12)-Holliday junction (HJ) complex. HJ DNA is sandwiched between 2 RuvA tetramers; dsDNA enters through RuvA and exits via RuvB. An RuvB hexamer assembles on each DNA strand where it exits the tetramer. Each RuvB hexamer is contacted by two RuvA subunits (via domain III) on 2 adjacent RuvB subunits; this complex drives branch migration. In the full resolvosome a probable DNA-RuvA(4)-RuvB(12)-RuvC(2) complex forms which resolves the HJ.

Its subcellular location is the cytoplasm. In terms of biological role, the RuvA-RuvB-RuvC complex processes Holliday junction (HJ) DNA during genetic recombination and DNA repair, while the RuvA-RuvB complex plays an important role in the rescue of blocked DNA replication forks via replication fork reversal (RFR). RuvA specifically binds to HJ cruciform DNA, conferring on it an open structure. The RuvB hexamer acts as an ATP-dependent pump, pulling dsDNA into and through the RuvAB complex. HJ branch migration allows RuvC to scan DNA until it finds its consensus sequence, where it cleaves and resolves the cruciform DNA. This chain is Holliday junction branch migration complex subunit RuvA, found in Laribacter hongkongensis (strain HLHK9).